Here is a 114-residue protein sequence, read N- to C-terminus: MSLGLLCCGAFSLLWAGPVNAGVTQTPKFRVLKTGQSMTLLCAQDMNHEYMYWYRQDPGMGLRLIHYSVGEGTTAKGEVPDGYNVSRLKKQNFLLGLESAAPSQTSVYFCASSY.

The N-terminal stretch at 1-21 is a signal peptide; it reads MSLGLLCCGAFSLLWAGPVNA. An Ig-like domain is found at 22–114; sequence GVTQTPKFRV…TSVYFCASSY (93 aa). Cys42 and Cys110 are disulfide-bonded. N-linked (GlcNAc...) asparagine glycosylation occurs at Asn84.

Alpha-beta TR is a heterodimer composed of an alpha and beta chain; disulfide-linked. The alpha-beta TR is associated with the transmembrane signaling CD3 coreceptor proteins to form the TR-CD3 (TcR or TCR). The assembly of alpha-beta TR heterodimers with CD3 occurs in the endoplasmic reticulum where a single alpha-beta TR heterodimer associates with one CD3D-CD3E heterodimer, one CD3G-CD3E heterodimer and one CD247 homodimer forming a stable octameric structure. CD3D-CD3E and CD3G-CD3E heterodimers preferentially associate with TR alpha and TR beta chains, respectively. The association of the CD247 homodimer is the last step of TcR assembly in the endoplasmic reticulum and is required for transport to the cell surface.

The protein resides in the cell membrane. Its function is as follows. V region of the variable domain of T cell receptor (TR) beta chain that participates in the antigen recognition. Alpha-beta T cell receptors are antigen specific receptors which are essential to the immune response and are present on the cell surface of T lymphocytes. Recognize peptide-major histocompatibility (MH) (pMH) complexes that are displayed by antigen presenting cells (APC), a prerequisite for efficient T cell adaptive immunity against pathogens. Binding of alpha-beta TR to pMH complex initiates TR-CD3 clustering on the cell surface and intracellular activation of LCK that phosphorylates the ITAM motifs of CD3G, CD3D, CD3E and CD247 enabling the recruitment of ZAP70. In turn ZAP70 phosphorylates LAT, which recruits numerous signaling molecules to form the LAT signalosome. The LAT signalosome propagates signal branching to three major signaling pathways, the calcium, the mitogen-activated protein kinase (MAPK) kinase and the nuclear factor NF-kappa-B (NF-kB) pathways, leading to the mobilization of transcription factors that are critical for gene expression and essential for T cell growth and differentiation. The T cell repertoire is generated in the thymus, by V-(D)-J rearrangement. This repertoire is then shaped by intrathymic selection events to generate a peripheral T cell pool of self-MH restricted, non-autoaggressive T cells. Post-thymic interaction of alpha-beta TR with the pMH complexes shapes TR structural and functional avidity. In Homo sapiens (Human), this protein is T cell receptor beta variable 6-2.